A 220-amino-acid chain; its full sequence is Protein CREG1 (220 aa).

A signal peptide spans 1-31 (MAGLSRGSARALLAALLASTLLALLVSPARG). N-linked (GlcNAc...) asparagine glycosylation is found at N160, N193, and N216.

The protein belongs to the CREG family. As to quaternary structure, homodimer. Interacts with IGF2R; the interaction is dependent on glycosylation. N-glycosylated.

Its subcellular location is the secreted. Its function is as follows. May contribute to the transcriptional control of cell growth and differentiation. Antagonizes transcriptional activation and cellular transformation by the adenovirus E1A protein. The transcriptional control activity of cell growth requires interaction with IGF2R. This Homo sapiens (Human) protein is Protein CREG1 (CREG1).